The chain runs to 443 residues: Probable D-serine dehydratase (443 aa).

At K116 the chain carries N6-(pyridoxal phosphate)lysine.

It belongs to the serine/threonine dehydratase family. DsdA subfamily. Requires pyridoxal 5'-phosphate as cofactor.

The enzyme catalyses D-serine = pyruvate + NH4(+). The polypeptide is Probable D-serine dehydratase (Bacillus cereus (strain G9842)).